Consider the following 676-residue polypeptide: Lutropin-choriogonadotropic hormone receptor (676 aa).

Positions 1 to 29 are cleaved as a signal peptide; that stretch reads MKQPLLALQLLKLLLLLLLPLPPLPRALR. The Extracellular segment spans residues 30–340; it reads EARCCPEPCN…EDIMGYDFLR (311 aa). N-linked (GlcNAc...) asparagine glycosylation is present at Asn103. 5 LRR repeats span residues 126-151, 153-175, 176-200, 201-224, and 225-248; these read LPRL…IFSS, TNFI…AFQG, MNNE…AFNG, TTVI…AFRG, and ATGP…GLES. 2 N-linked (GlcNAc...) asparagine glycosylation sites follow: Asn178 and Asn199. A Sulfotyrosine modification is found at Tyr308. The chain crosses the membrane as a helical span at residues 341-362; it reads VLIWLINILAIMGNMTVLFVLL. Over 363–372 the chain is Cytoplasmic; the sequence is TSRYKLTVPR. Residues 373 to 393 form a helical membrane-spanning segment; the sequence is FLMCNLSFADFCMGLYLLLIA. The Extracellular portion of the chain corresponds to 394–416; the sequence is SVDSQTKGQYYNHAIDWQTGSGC. Cysteines 416 and 491 form a disulfide. Residues 417–439 form a helical membrane-spanning segment; sequence NTAGFFTVFASELSVYTLTVITL. Topologically, residues 440–459 are cytoplasmic; sequence ERWHTITYAIHLDQKLRLRH. A helical membrane pass occupies residues 460-482; sequence AILIMLGGWLFSSLIAMLPLVGV. The Extracellular segment spans residues 483–502; it reads SNYMKVSICFPMDVETTLSQ. Residues 503-526 traverse the membrane as a helical segment; the sequence is IYILTILILNVVAFIIICACYIKI. Topologically, residues 527–547 are cytoplasmic; that stretch reads YFAVRNPELMATNKDTKIAKK. A helical transmembrane segment spans residues 548–571; it reads MAILIFTDFTCMAPISFFAISAAF. Topologically, residues 572–582 are extracellular; it reads KMPLITVTNSK. A helical membrane pass occupies residues 583-604; sequence VLLVLFYPINSCANPFLYAIFT. Residues 605 to 676 are Cytoplasmic-facing; that stretch reads KTFRRDFFLL…LLDKTCYKEY (72 aa). Residues Cys620 and Cys621 are each lipidated (S-palmitoyl cysteine).

This sequence belongs to the G-protein coupled receptor 1 family. FSH/LSH/TSH subfamily. Sulfated.

It localises to the cell membrane. Its function is as follows. Receptor for lutropin-choriogonadotropic hormone. The activity of this receptor is mediated by G proteins which activate adenylate cyclase. This is Lutropin-choriogonadotropic hormone receptor (LHCGR) from Callithrix jacchus (White-tufted-ear marmoset).